Reading from the N-terminus, the 327-residue chain is MWVPAVANLLLLSLGLLEAIQAQSHLVTRRDLFSQETPLDMAPASFDDQYVGCAAAMTAALPHLNLTEFQVNKVYADGWALASSQWRERSAWGPEWGLSTTRLPPPPAGFRDEHGVALLAYTANSPLHKEFNAAVRQAGRSRAHYLQHFSFKTLHFLLTEALQLLGRDQRMPRCRQVFRGVHGLRFRPAGPGTTVRLGGFASASLKNVAAQQFGEDTFFGIWTCLGVPIQGYSFFPGEEEVLIPPFETFQVINASRPAQGPARIYLKALGKRSSYNCEYIKEMQCKSRPCHLDNSASAQERLSTAWSLLLLLAFLAVGPFPGSPGLF.

The N-terminal stretch at 1–22 is a signal peptide; sequence MWVPAVANLLLLSLGLLEAIQA. 2 disulfide bridges follow: cysteine 53/cysteine 277 and cysteine 174/cysteine 224. Asparagine 65 carries N-linked (GlcNAc...) asparagine glycosylation. One can recognise a TR mART core domain in the interval 73–273; sequence KVYADGWALA…IYLKALGKRS (201 aa). Residues tyrosine 121 and arginine 179 each contribute to the NAD(+) site. Catalysis depends on residues arginine 179 and serine 202. Position 233 (serine 233) interacts with NAD(+). Residue glutamate 240 is part of the active site. An N-linked (GlcNAc...) asparagine glycan is attached at asparagine 253. Residue serine 295 is the site of GPI-anchor amidated serine attachment. Positions 296-327 are cleaved as a propeptide — removed in mature form; the sequence is ASAQERLSTAWSLLLLLAFLAVGPFPGSPGLF.

The protein belongs to the Arg-specific ADP-ribosyltransferase family. In terms of tissue distribution, primarily in skeletal and cardiac muscle.

The protein localises to the sarcoplasmic reticulum membrane. It catalyses the reaction L-arginyl-[protein] + NAD(+) = N(omega)-(ADP-D-ribosyl)-L-arginyl-[protein] + nicotinamide + H(+). Has ADP-ribosyltransferase activity toward GLP1R. This Oryctolagus cuniculus (Rabbit) protein is GPI-linked NAD(P)(+)--arginine ADP-ribosyltransferase 1 (ART1).